Here is a 109-residue protein sequence, read N- to C-terminus: Large ribosomal subunit protein uL24 (109 aa).

The protein belongs to the universal ribosomal protein uL24 family. Part of the 50S ribosomal subunit.

Its function is as follows. One of two assembly initiator proteins, it binds directly to the 5'-end of the 23S rRNA, where it nucleates assembly of the 50S subunit. One of the proteins that surrounds the polypeptide exit tunnel on the outside of the subunit. This chain is Large ribosomal subunit protein uL24, found in Ehrlichia chaffeensis (strain ATCC CRL-10679 / Arkansas).